The following is a 44-amino-acid chain: Photosystem II reaction center protein K (44 aa).

A propeptide spanning residues 1–7 is cleaved from the precursor; that stretch reads MESLLLA. A helical membrane pass occupies residues 23-43; it reads FPVIPVFFLLLAFVWQAAVGF.

This sequence belongs to the PsbK family. As to quaternary structure, PSII is composed of 1 copy each of membrane proteins PsbA, PsbB, PsbC, PsbD, PsbE, PsbF, PsbH, PsbI, PsbJ, PsbK, PsbL, PsbM, PsbT, PsbX, PsbY, PsbZ, Psb30/Ycf12, at least 3 peripheral proteins of the oxygen-evolving complex and a large number of cofactors. It forms dimeric complexes.

It is found in the plastid. It localises to the chloroplast thylakoid membrane. Its function is as follows. One of the components of the core complex of photosystem II (PSII). PSII is a light-driven water:plastoquinone oxidoreductase that uses light energy to abstract electrons from H(2)O, generating O(2) and a proton gradient subsequently used for ATP formation. It consists of a core antenna complex that captures photons, and an electron transfer chain that converts photonic excitation into a charge separation. The chain is Photosystem II reaction center protein K from Thalassiosira pseudonana (Marine diatom).